The sequence spans 837 residues: Protein translocase subunit SecA (837 aa).

Residues Q85, 103–107 (GEGKT), and D493 contribute to the ATP site. Zn(2+)-binding residues include C821, C823, C832, and H833.

The protein belongs to the SecA family. As to quaternary structure, monomer and homodimer. Part of the essential Sec protein translocation apparatus which comprises SecA, SecYEG and auxiliary proteins SecDF. Other proteins may also be involved. Zn(2+) is required as a cofactor.

It is found in the cell membrane. The protein localises to the cytoplasm. The enzyme catalyses ATP + H2O + cellular proteinSide 1 = ADP + phosphate + cellular proteinSide 2.. In terms of biological role, part of the Sec protein translocase complex. Interacts with the SecYEG preprotein conducting channel. Has a central role in coupling the hydrolysis of ATP to the transfer of proteins into and across the cell membrane, serving as an ATP-driven molecular motor driving the stepwise translocation of polypeptide chains across the membrane. In Streptococcus pneumoniae serotype 19F (strain G54), this protein is Protein translocase subunit SecA.